The following is a 154-amino-acid chain: Large ribosomal subunit protein uL15 (154 aa).

The disordered stretch occupies residues 1–44 (MKLNELGNCKGATRNRKRVGRGIGSGTGKTSGRGVKGQKSRSGV). A compositionally biased stretch (gly residues) spans 21 to 35 (RGIGSGTGKTSGRGV).

The protein belongs to the universal ribosomal protein uL15 family. As to quaternary structure, part of the 50S ribosomal subunit.

In terms of biological role, binds to the 23S rRNA. In Bartonella quintana (strain Toulouse) (Rochalimaea quintana), this protein is Large ribosomal subunit protein uL15.